We begin with the raw amino-acid sequence, 180 residues long: Bifunctional protein PyrR (180 aa).

The short motif at 101 to 113 is the PRPP-binding element; it reads VILVDDVLYTGRT.

This sequence belongs to the purine/pyrimidine phosphoribosyltransferase family. PyrR subfamily. In terms of assembly, homodimer and homohexamer; in equilibrium.

The catalysed reaction is UMP + diphosphate = 5-phospho-alpha-D-ribose 1-diphosphate + uracil. In terms of biological role, regulates transcriptional attenuation of the pyrimidine nucleotide (pyr) operon by binding in a uridine-dependent manner to specific sites on pyr mRNA. This disrupts an antiterminator hairpin in the RNA and favors formation of a downstream transcription terminator, leading to a reduced expression of downstream genes. Functionally, also displays a weak uracil phosphoribosyltransferase activity which is not physiologically significant. This Bacillus mycoides (strain KBAB4) (Bacillus weihenstephanensis) protein is Bifunctional protein PyrR.